Here is a 293-residue protein sequence, read N- to C-terminus: Energy-coupling factor transporter ATP-binding protein EcfA2 (293 aa).

Residues 3–246 (ITFQKVEHRY…ADELEKIGVD (244 aa)) form the ABC transporter domain. 40-47 (GHTGSGKS) provides a ligand contact to ATP.

The protein belongs to the ABC transporter superfamily. Energy-coupling factor EcfA family. Forms a stable energy-coupling factor (ECF) transporter complex composed of 2 membrane-embedded substrate-binding proteins (S component), 2 ATP-binding proteins (A component) and 2 transmembrane proteins (T component).

The protein localises to the cell membrane. In terms of biological role, ATP-binding (A) component of a common energy-coupling factor (ECF) ABC-transporter complex. Unlike classic ABC transporters this ECF transporter provides the energy necessary to transport a number of different substrates. The chain is Energy-coupling factor transporter ATP-binding protein EcfA2 from Bacillus cereus (strain ATCC 14579 / DSM 31 / CCUG 7414 / JCM 2152 / NBRC 15305 / NCIMB 9373 / NCTC 2599 / NRRL B-3711).